A 444-amino-acid polypeptide reads, in one-letter code: Sprouty-related, EVH1 domain-containing protein 1 (444 aa).

Residue Ser-2 is modified to N-acetylserine. Positions 6 to 123 (ATSDNDNSYA…RGIRRAIEDI (118 aa)) constitute a WH1 domain. Lys-225 bears the N6-methyllysine mark. Positions 234–286 (SIRHVSFQDEDEIVRINPRDILIRRYADYRHPDMWKNDLERDDTDSSVPFSKQ) constitute a KBD domain. Phosphoserine is present on Ser-239. The tract at residues 268-287 (WKNDLERDDTDSSVPFSKQD) is disordered. Ser-309 carries the post-translational modification Phosphoserine. Positions 333 to 444 (SRCVYCQERF…CCGGKHKAAG (112 aa)) are required for interaction with TESK1. The 109-residue stretch at 334–442 (RCVYCQERFN…CGCCGGKHKA (109 aa)) folds into the SPR domain.

Homodimer and heterodimer. Able to interact with SPRED2 to form heterodimers. Interacts (via C-terminus) with TAOK1/MARKK (via C-terminus); the interaction does not affect TAOK1 kinase activity. Interacts (via C-terminus) with TESK1 (via C-terminus); the interaction inhibits TESK1 kinase activity. Interacts with CAV1. Interacts with RAS. Interacts with palmitoyltransferase ZDHHC17/HIP14; the interaction leads to palmitoylation of SPRED1. Post-translationally, palmitoylated by ZDHHC17/HIP14. Ubiquitinated. In terms of processing, phosphorylated on tyrosine. Expressed in brain. Weakly expressed in lung, heart, liver, kidney, intestine, spleen, testis, thymus, colon and ovary. Also expressed in embryonic tissues such as heart, lung, liver and brain. Highly expressed in IL3-dependent hematopoietic cell lines (Ba/F3 and MC/9) and bone marrow-derived mast cells (BMMC).

It localises to the cell membrane. It is found in the membrane. The protein resides in the caveola. The protein localises to the nucleus. In terms of biological role, tyrosine kinase substrate that inhibits growth-factor-mediated activation of MAP kinase. Negatively regulates hematopoiesis of bone marrow. Inhibits fibroblast growth factor (FGF)-induced retinal lens fiber differentiation, probably by inhibiting FGF-mediated phosphorylation of ERK1/2. Attenuates actin stress fiber formation via inhibition of TESK1-mediated phosphorylation of cofilin. Inhibits TGFB-induced epithelial-to-mesenchymal transition in lens epithelial cells. This Mus musculus (Mouse) protein is Sprouty-related, EVH1 domain-containing protein 1 (Spred1).